Consider the following 391-residue polypeptide: Alkanesulfonate monooxygenase (391 aa).

The protein belongs to the SsuD family.

The catalysed reaction is an alkanesulfonate + FMNH2 + O2 = an aldehyde + FMN + sulfite + H2O + 2 H(+). Its function is as follows. Catalyzes the desulfonation of aliphatic sulfonates. The protein is Alkanesulfonate monooxygenase of Methylorubrum extorquens (strain CM4 / NCIMB 13688) (Methylobacterium extorquens).